A 190-amino-acid polypeptide reads, in one-letter code: Orotate phosphoribosyltransferase (190 aa).

114–122 serves as a coordination point for 5-phospho-alpha-D-ribose 1-diphosphate; the sequence is EDVVTTGGS. Orotate is bound by residues T118 and R146.

Belongs to the purine/pyrimidine phosphoribosyltransferase family. PyrE subfamily. In terms of assembly, homodimer. Mg(2+) serves as cofactor.

The catalysed reaction is orotidine 5'-phosphate + diphosphate = orotate + 5-phospho-alpha-D-ribose 1-diphosphate. Its pathway is pyrimidine metabolism; UMP biosynthesis via de novo pathway; UMP from orotate: step 1/2. Its function is as follows. Catalyzes the transfer of a ribosyl phosphate group from 5-phosphoribose 1-diphosphate to orotate, leading to the formation of orotidine monophosphate (OMP). This chain is Orotate phosphoribosyltransferase, found in Thermoanaerobacter sp. (strain X514).